Reading from the N-terminus, the 270-residue chain is NAD(P)H-hydrate epimerase (270 aa).

The YjeF N-terminal domain occupies Phe25–Gln234. Asp73 to Gln77 is a (6S)-NADPHX binding site. Asn74 and Asp144 together coordinate K(+). (6S)-NADPHX is bound by residues Gly148–His154 and Glu177. Thr180 contacts K(+).

It belongs to the NnrE/AIBP family. K(+) is required as a cofactor.

The enzyme catalyses (6R)-NADHX = (6S)-NADHX. The catalysed reaction is (6R)-NADPHX = (6S)-NADPHX. Catalyzes the epimerization of the S- and R-forms of NAD(P)HX, a damaged form of NAD(P)H that is a result of enzymatic or heat-dependent hydration. This is a prerequisite for the S-specific NAD(P)H-hydrate dehydratase to allow the repair of both epimers of NAD(P)HX. The polypeptide is NAD(P)H-hydrate epimerase (Legionella pneumophila serogroup 1 (strain 2300/99 Alcoy)).